Reading from the N-terminus, the 131-residue chain is uncharacterized protein (131 aa).

Residues 112-131 (LTDNPGAVRKSQKSLIPPYN) form a disordered region.

This is an uncharacterized protein from Fowl adenovirus A serotype 1 (strain CELO / Phelps) (FAdV-1).